We begin with the raw amino-acid sequence, 811 residues long: RFX-like DNA-binding protein RFX1 (811 aa).

2 disordered regions span residues Glu48–Pro92 and Leu111–Pro156. The span at Ser51–Asn70 shows a compositional bias: low complexity. Over residues Ser140–Gln149 the composition is skewed to pro residues. The residue at position 173 (Ser173) is a Phosphoserine. The interval Lys181–Ser222 is disordered. The span at Thr185–Pro204 shows a compositional bias: polar residues. A DNA-binding region (RFX-type winged-helix) is located at residues Ala285–Val360. Residues Leu377–Ser391 are compositionally biased toward low complexity. The tract at residues Leu377–Ser461 is disordered. Polar residues predominate over residues Asn409 to Pro428. Residues Glu434–Lys445 are compositionally biased toward basic and acidic residues.

It belongs to the RFX family.

The polypeptide is RFX-like DNA-binding protein RFX1 (RFX1) (Saccharomyces cerevisiae (strain ATCC 204508 / S288c) (Baker's yeast)).